The sequence spans 420 residues: Protein STB1 (420 aa).

The residue at position 2 (serine 2) is an N-acetylserine. An interaction with SWI6 region spans residues 2 to 70; sequence SQPQMSPEKE…DEDHKTLLEA (69 aa). Serine 7 carries the phosphoserine modification. Disordered stretches follow at residues 30 to 187 and 273 to 319; these read QLKL…SDNT and DSPS…ELNG. A compositionally biased stretch (basic and acidic residues) spans 43 to 55; the sequence is RKQDSTTKKRSGE. The residue at position 72 (serine 72) is a Phosphoserine. A Phosphothreonine modification is found at threonine 99. A Phosphoserine modification is found at serine 102. Basic and acidic residues predominate over residues 106–122; sequence RKAEDRSQQIKPRKEDT. The segment covering 156 to 169 has biased composition (low complexity); the sequence is NNNNSSNHSNNNNN. A compositionally biased stretch (polar residues) spans 277-319; the sequence is LYLSNNNGSVQATLSPQQRRKPTTNTLHPPSNVPTTPSRELNG. Residue threonine 419 is modified to Phosphothreonine.

Interacts with the ANK repeats of SWI6. The interaction with SWI6 is required for function. Interacts with SIN3. Post-translationally, phosphorylated by CDC28 in a cell cycle-dependent manner, inhibiting the interaction with SWI6.

It is found in the cytoplasm. The protein localises to the nucleus. Its function is as follows. Involved in the regulation and timing of MBF-dependent transcription in late G1 of the cell cycle. In Saccharomyces cerevisiae (strain ATCC 204508 / S288c) (Baker's yeast), this protein is Protein STB1 (STB1).